Consider the following 141-residue polypeptide: Large ribosomal subunit protein uL11 (141 aa).

It belongs to the universal ribosomal protein uL11 family. As to quaternary structure, part of the ribosomal stalk of the 50S ribosomal subunit. Interacts with L10 and the large rRNA to form the base of the stalk. L10 forms an elongated spine to which L12 dimers bind in a sequential fashion forming a multimeric L10(L12)X complex. Post-translationally, one or more lysine residues are methylated.

Forms part of the ribosomal stalk which helps the ribosome interact with GTP-bound translation factors. The polypeptide is Large ribosomal subunit protein uL11 (Desulfotalea psychrophila (strain LSv54 / DSM 12343)).